Here is an 84-residue protein sequence, read N- to C-terminus: Small ribosomal subunit protein bS16 (84 aa).

Belongs to the bacterial ribosomal protein bS16 family.

In Cupriavidus necator (strain ATCC 17699 / DSM 428 / KCTC 22496 / NCIMB 10442 / H16 / Stanier 337) (Ralstonia eutropha), this protein is Small ribosomal subunit protein bS16.